The following is a 472-amino-acid chain: Probable low-salt glycan biosynthesis flippase Agl15 (472 aa).

The next 13 helical transmembrane spans lie at 8–28 (IKLF…ITFF), 38–58 (GVFF…DFGL), 77–97 (SSAI…IVVF), 109–129 (FAVY…AVSV), 164–184 (AEAL…WGLS), 209–229 (VVSS…IGIF), 244–264 (VTAI…PQVS), 289–309 (LVIP…GIVF), 315–335 (IASY…VHVI), 354–374 (VISV…FGIV), 375–395 (GAAV…AHYL), 408–428 (IGWC…FKTL), and 434–454 (LIQL…ITLL).

The protein belongs to the AglR/Agl15 family.

It localises to the cell membrane. It participates in protein modification; protein glycosylation. It functions in the pathway cell surface structure biogenesis; S-layer biogenesis. In terms of biological role, flippase involved in N-glycan biosynthetic pathway that takes place under low-salt conditions (1.75 M instead of 3.4 M). Participates in the formation of the tetrasaccharide present at 'Asn-532' of S-layer glycoprotein Csg, consisting of a sulfated hexose, 2 hexoses and rhamnose. Probably moves the tetrasaccharide from the cytosolic to the extracytosolic side of the membrane. The protein is Probable low-salt glycan biosynthesis flippase Agl15 (agl15) of Haloferax volcanii (strain ATCC 29605 / DSM 3757 / JCM 8879 / NBRC 14742 / NCIMB 2012 / VKM B-1768 / DS2) (Halobacterium volcanii).